A 206-amino-acid chain; its full sequence is Ion-translocating oxidoreductase complex subunit G (206 aa).

Residues 9–29 (GITLALFAAGSTGLTAVINQM) form a helical membrane-spanning segment. T174 carries the post-translational modification FMN phosphoryl threonine.

This sequence belongs to the RnfG family. In terms of assembly, the complex is composed of six subunits: RsxA, RsxB, RsxC, RsxD, RsxE and RsxG. FMN is required as a cofactor.

The protein resides in the cell inner membrane. Functionally, part of a membrane-bound complex that couples electron transfer with translocation of ions across the membrane. Required to maintain the reduced state of SoxR. The protein is Ion-translocating oxidoreductase complex subunit G of Salmonella typhimurium (strain LT2 / SGSC1412 / ATCC 700720).